The following is a 242-amino-acid chain: Vacuole localized DSC protein 1 (242 aa).

The next 2 membrane-spanning stretches (helical) occupy residues 128-148 (PYGFVIMLLIREFTCPVPTAF) and 152-172 (LLLVLLDILLLFCQIVIINGS).

Part of the vacuole-localized DSC E3 ligase complex composed of at least TUL1, DSC2, DSC3, UBX3, CDC48 and VLD1.

The protein localises to the vacuole membrane. Its function is as follows. Component of the vacuole-localized DSC E3 ubiquitin ligase complex involved in the targeting of the complex to the vacuole membrane via the AP3 pathway to ubiquinate vacuolar membrane proteins. Competes with GLD1 to determine the subcellular localizations of the DSC complex. The polypeptide is Vacuole localized DSC protein 1 (Saccharomyces cerevisiae (strain ATCC 204508 / S288c) (Baker's yeast)).